The sequence spans 278 residues: Elongation factor Ts (278 aa).

The involved in Mg(2+) ion dislocation from EF-Tu stretch occupies residues 79-82; sequence TDFV.

Belongs to the EF-Ts family.

The protein resides in the cytoplasm. In terms of biological role, associates with the EF-Tu.GDP complex and induces the exchange of GDP to GTP. It remains bound to the aminoacyl-tRNA.EF-Tu.GTP complex up to the GTP hydrolysis stage on the ribosome. The sequence is that of Elongation factor Ts from Borrelia recurrentis (strain A1).